The chain runs to 450 residues: mRNA cleavage and polyadenylation factor CLP1 (450 aa).

ATP is bound by residues glutamate 29, lysine 67, and 137–142 (NSGKTS).

Belongs to the Clp1 family. Clp1 subfamily. Component of a pre-mRNA cleavage factor complex. Interacts directly with PCF11.

It is found in the nucleus. Required for endonucleolytic cleavage during polyadenylation-dependent pre-mRNA 3'-end formation. The polypeptide is mRNA cleavage and polyadenylation factor CLP1 (Yarrowia lipolytica (strain CLIB 122 / E 150) (Yeast)).